We begin with the raw amino-acid sequence, 884 residues long: Valine--tRNA ligase (884 aa).

Residues 43 to 53 (PNVTGSLHIGH) carry the 'HIGH' region motif. A 'KMSKS' region motif is present at residues 530-534 (KMSKS). An ATP-binding site is contributed by K533. Residues 817-884 (VIDLDAERGR…KLKAALERLM (68 aa)) are a coiled coil.

It belongs to the class-I aminoacyl-tRNA synthetase family. ValS type 1 subfamily. As to quaternary structure, monomer.

It is found in the cytoplasm. The catalysed reaction is tRNA(Val) + L-valine + ATP = L-valyl-tRNA(Val) + AMP + diphosphate. Functionally, catalyzes the attachment of valine to tRNA(Val). As ValRS can inadvertently accommodate and process structurally similar amino acids such as threonine, to avoid such errors, it has a 'posttransfer' editing activity that hydrolyzes mischarged Thr-tRNA(Val) in a tRNA-dependent manner. This chain is Valine--tRNA ligase, found in Zymomonas mobilis subsp. mobilis (strain ATCC 31821 / ZM4 / CP4).